Consider the following 504-residue polypeptide: Cytochrome P450 2K1 (504 aa).

Heme is bound at residue cysteine 447.

The protein belongs to the cytochrome P450 family. Requires heme as cofactor.

It localises to the endoplasmic reticulum membrane. Its subcellular location is the microsome membrane. The enzyme catalyses an organic molecule + reduced [NADPH--hemoprotein reductase] + O2 = an alcohol + oxidized [NADPH--hemoprotein reductase] + H2O + H(+). This chain is Cytochrome P450 2K1 (cyp2k1), found in Oncorhynchus mykiss (Rainbow trout).